Consider the following 609-residue polypeptide: UvrABC system protein C (609 aa).

Positions 16–94 (SSAGVYRMYD…IKQYMPKYNV (79 aa)) constitute a GIY-YIG domain. The UVR domain maps to 203–238 (QQVISTLVAKMEQAAQQQEYEQAARFRDQIMALRKV).

The protein belongs to the UvrC family. As to quaternary structure, interacts with UvrB in an incision complex.

It is found in the cytoplasm. Functionally, the UvrABC repair system catalyzes the recognition and processing of DNA lesions. UvrC both incises the 5' and 3' sides of the lesion. The N-terminal half is responsible for the 3' incision and the C-terminal half is responsible for the 5' incision. This is UvrABC system protein C from Shewanella putrefaciens (strain CN-32 / ATCC BAA-453).